The chain runs to 358 residues: Carbamoyl phosphate synthase small chain (358 aa).

The CPSase stretch occupies residues 1-172 (MKAALALEDG…EAKRFESDGD (172 aa)). Ser-45, Gly-222, and Gly-224 together coordinate L-glutamine. A Glutamine amidotransferase type-1 domain is found at 174 to 358 (EVVLVDCGVK…RYVDMLREYR (185 aa)). Cys-249 functions as the Nucleophile in the catalytic mechanism. 4 residues coordinate L-glutamine: Leu-250, Gln-253, Asn-291, and Phe-294. Active-site residues include His-333 and Glu-335.

This sequence belongs to the CarA family. Composed of two chains; the small (or glutamine) chain promotes the hydrolysis of glutamine to ammonia, which is used by the large (or ammonia) chain to synthesize carbamoyl phosphate. Tetramer of heterodimers (alpha,beta)4.

The enzyme catalyses hydrogencarbonate + L-glutamine + 2 ATP + H2O = carbamoyl phosphate + L-glutamate + 2 ADP + phosphate + 2 H(+). The catalysed reaction is L-glutamine + H2O = L-glutamate + NH4(+). The protein operates within amino-acid biosynthesis; L-arginine biosynthesis; carbamoyl phosphate from bicarbonate: step 1/1. It functions in the pathway pyrimidine metabolism; UMP biosynthesis via de novo pathway; (S)-dihydroorotate from bicarbonate: step 1/3. Small subunit of the glutamine-dependent carbamoyl phosphate synthetase (CPSase). CPSase catalyzes the formation of carbamoyl phosphate from the ammonia moiety of glutamine, carbonate, and phosphate donated by ATP, constituting the first step of 2 biosynthetic pathways, one leading to arginine and/or urea and the other to pyrimidine nucleotides. The small subunit (glutamine amidotransferase) binds and cleaves glutamine to supply the large subunit with the substrate ammonia. This is Carbamoyl phosphate synthase small chain from Archaeoglobus fulgidus (strain ATCC 49558 / DSM 4304 / JCM 9628 / NBRC 100126 / VC-16).